Consider the following 609-residue polypeptide: ATP-dependent lipid A-core flippase (609 aa).

6 consecutive transmembrane segments (helical) span residues Leu47 to Ile67, Ile88 to Phe108, Ala167 to Val187, Trp190 to Ile210, Val279 to Gly299, and Gly305 to Leu325. One can recognise an ABC transmembrane type-1 domain in the interval Leu47–Lys340. The ABC transporter domain maps to Val372–Ser606. Gly404–Thr411 contacts ATP.

This sequence belongs to the ABC transporter superfamily. Lipid exporter (TC 3.A.1.106) family. As to quaternary structure, homodimer.

The protein resides in the cell inner membrane. It catalyses the reaction ATP + H2O + lipid A-core oligosaccharideSide 1 = ADP + phosphate + lipid A-core oligosaccharideSide 2.. In terms of biological role, involved in lipopolysaccharide (LPS) biosynthesis. Translocates lipid A-core from the inner to the outer leaflet of the inner membrane. Transmembrane domains (TMD) form a pore in the inner membrane and the ATP-binding domain (NBD) is responsible for energy generation. This chain is ATP-dependent lipid A-core flippase, found in Francisella tularensis subsp. tularensis (strain FSC 198).